We begin with the raw amino-acid sequence, 447 residues long: Argininosuccinate synthase (447 aa).

ATP-binding positions include 17–25 (AFSGGLDTS) and Ala-43. Residue Tyr-99 coordinates L-citrulline. ATP-binding residues include Gly-129 and Thr-131. Residues Thr-131, Asn-135, and Asp-136 each contribute to the L-aspartate site. Asn-135 contributes to the L-citrulline binding site. Asp-136 contributes to the ATP binding site. L-citrulline contacts are provided by Arg-139 and Ser-192. Asp-194 serves as a coordination point for ATP. 3 residues coordinate L-citrulline: Thr-201, Glu-203, and Glu-280.

It belongs to the argininosuccinate synthase family. Type 2 subfamily. In terms of assembly, homotetramer.

Its subcellular location is the cytoplasm. It catalyses the reaction L-citrulline + L-aspartate + ATP = 2-(N(omega)-L-arginino)succinate + AMP + diphosphate + H(+). It functions in the pathway amino-acid biosynthesis; L-arginine biosynthesis; L-arginine from L-ornithine and carbamoyl phosphate: step 2/3. This Salmonella paratyphi B (strain ATCC BAA-1250 / SPB7) protein is Argininosuccinate synthase.